The chain runs to 301 residues: Putative S-adenosyl-L-methionine-dependent methyltransferase MT0851 (301 aa).

S-adenosyl-L-methionine-binding positions include Asp-127 and 156–157; that span reads DL.

The protein belongs to the UPF0677 family.

Its function is as follows. Exhibits S-adenosyl-L-methionine-dependent methyltransferase activity. This Mycobacterium tuberculosis (strain CDC 1551 / Oshkosh) protein is Putative S-adenosyl-L-methionine-dependent methyltransferase MT0851.